The primary structure comprises 252 residues: Phosphate import ATP-binding protein PstB 1 (252 aa).

The 242-residue stretch at 6–247 (LQVSDLSVYY…PQHKETEDYI (242 aa)) folds into the ABC transporter domain. 38-45 (GPSGSGKS) contributes to the ATP binding site.

It belongs to the ABC transporter superfamily. Phosphate importer (TC 3.A.1.7) family. The complex is composed of two ATP-binding proteins (PstB), two transmembrane proteins (PstC and PstA) and a solute-binding protein (PstS).

Its subcellular location is the cell membrane. The enzyme catalyses phosphate(out) + ATP + H2O = ADP + 2 phosphate(in) + H(+). In terms of biological role, part of the ABC transporter complex PstSACB involved in phosphate import. Responsible for energy coupling to the transport system. This Streptococcus pneumoniae (strain ATCC BAA-255 / R6) protein is Phosphate import ATP-binding protein PstB 1.